A 924-amino-acid chain; its full sequence is Isoleucine--tRNA ligase (924 aa).

Positions 58-68 (PYANGQIHVGH) match the 'HIGH' region motif. An L-isoleucyl-5'-AMP-binding site is contributed by Glu561. Positions 602–606 (KMSKS) match the 'KMSKS' region motif. ATP is bound at residue Lys605. Residues Cys887, Cys890, Cys907, and Cys910 each coordinate Zn(2+).

The protein belongs to the class-I aminoacyl-tRNA synthetase family. IleS type 1 subfamily. Monomer. It depends on Zn(2+) as a cofactor.

Its subcellular location is the cytoplasm. The enzyme catalyses tRNA(Ile) + L-isoleucine + ATP = L-isoleucyl-tRNA(Ile) + AMP + diphosphate. Catalyzes the attachment of isoleucine to tRNA(Ile). As IleRS can inadvertently accommodate and process structurally similar amino acids such as valine, to avoid such errors it has two additional distinct tRNA(Ile)-dependent editing activities. One activity is designated as 'pretransfer' editing and involves the hydrolysis of activated Val-AMP. The other activity is designated 'posttransfer' editing and involves deacylation of mischarged Val-tRNA(Ile). In Dichelobacter nodosus (strain VCS1703A), this protein is Isoleucine--tRNA ligase.